Consider the following 390-residue polypeptide: Dihydroorotase (390 aa).

Positions 54 and 56 each coordinate Zn(2+). Residues 56 to 58 (HIR) and Asn-88 contribute to the substrate site. The Zn(2+) site is built by Lys-136, His-160, His-197, and Asp-259. Lys-136 is modified (N6-carboxylysine). Asp-259 is an active-site residue. Substrate-binding positions include His-263 and 277 to 278 (PG).

It belongs to the metallo-dependent hydrolases superfamily. DHOase family. Class I DHOase subfamily. Zn(2+) is required as a cofactor.

The catalysed reaction is (S)-dihydroorotate + H2O = N-carbamoyl-L-aspartate + H(+). It functions in the pathway pyrimidine metabolism; UMP biosynthesis via de novo pathway; (S)-dihydroorotate from bicarbonate: step 3/3. Functionally, catalyzes the reversible cyclization of carbamoyl aspartate to dihydroorotate. In Saccharolobus solfataricus (strain ATCC 35092 / DSM 1617 / JCM 11322 / P2) (Sulfolobus solfataricus), this protein is Dihydroorotase.